The following is a 50-amino-acid chain: Metallothionein zym1 (50 aa).

Zn(2+)-binding residues include C7, C15, C17, C21, C23, C26, C30, C32, C40, C42, C45, and C47.

The protein belongs to the metallothionein superfamily.

The protein localises to the cytoplasm. It is found in the nucleus. Metallothionein involved in tolerance to zinc and cadmium. Binds four zinc ions. The protein is Metallothionein zym1 (zym1) of Schizosaccharomyces pombe (strain 972 / ATCC 24843) (Fission yeast).